A 408-amino-acid polypeptide reads, in one-letter code: MTKTKFNPYQFRKQFKWFKNNPQWVNFDNAATSIALDTVSQACKEYYELFSVNPHNKTPDLNNQIIAIIAETRQLVADWFNVTALEIIFTSSATESINLFAHGLKPWIKPGDEIVLKGDEHSANVLPWVALAKQTKARLVWVEKQANQSLEDTFKSLINPKTKVVAITATSNLFGNSIDFAQIADYLKQVNPKAFVAVDAVQTVQHKQIDIAKTQIDFLAFSTHKFYGPTGLGVAYIKKSLQPQLQPLKLGGDIFTQIDPDNTIHFKSTPLKFEAGTPNIMAIYALNKLLRFFKQKFNFAQMMAYGHQLKQQAYELLNSNPQIVLANHDQDVPIFSFKHRQLATIDLATFLNINKIMVRQGSICVGRYRNKDYFVRVSLMHYNTVKELQYLAKLLATDTKTIIKNVIK.

Position 225 is an N6-(pyridoxal phosphate)lysine (lysine 225).

It belongs to the class-V pyridoxal-phosphate-dependent aminotransferase family. Csd subfamily. Pyridoxal 5'-phosphate is required as a cofactor.

It carries out the reaction (sulfur carrier)-H + L-cysteine = (sulfur carrier)-SH + L-alanine. Its function is as follows. Catalyzes the removal of elemental sulfur and selenium atoms from L-cysteine, L-cystine, L-selenocysteine, and L-selenocystine to produce L-alanine. The chain is Probable cysteine desulfurase (csd) from Mycoplasma pneumoniae (strain ATCC 29342 / M129 / Subtype 1) (Mycoplasmoides pneumoniae).